An 87-amino-acid polypeptide reads, in one-letter code: Phosphoribosyl-ATP pyrophosphatase (87 aa).

Belongs to the PRA-PH family.

The protein resides in the cytoplasm. The catalysed reaction is 1-(5-phospho-beta-D-ribosyl)-ATP + H2O = 1-(5-phospho-beta-D-ribosyl)-5'-AMP + diphosphate + H(+). It functions in the pathway amino-acid biosynthesis; L-histidine biosynthesis; L-histidine from 5-phospho-alpha-D-ribose 1-diphosphate: step 2/9. The protein is Phosphoribosyl-ATP pyrophosphatase (hisE) of Corynebacterium glutamicum (strain ATCC 13032 / DSM 20300 / JCM 1318 / BCRC 11384 / CCUG 27702 / LMG 3730 / NBRC 12168 / NCIMB 10025 / NRRL B-2784 / 534).